Reading from the N-terminus, the 356-residue chain is Tyrosine recombinase XerS (356 aa).

The region spanning 16-121 (IMPWYVLEYY…ALSSLFKYLT (106 aa)) is the Core-binding (CB) domain. Residues 169 to 354 (EFLEYIDCEY…VNDEQKNALD (186 aa)) form the Tyr recombinase domain. Residues Arg-210, Lys-234, His-306, Arg-309, and His-332 contribute to the active site. The O-(3'-phospho-DNA)-tyrosine intermediate role is filled by Tyr-341.

Belongs to the 'phage' integrase family. XerS subfamily.

Its subcellular location is the cytoplasm. With respect to regulation, ftsK is required for recombination. Its function is as follows. Site-specific tyrosine recombinase, which acts by catalyzing the cutting and rejoining of the recombining DNA molecules. Essential to convert dimers of the bacterial chromosome into monomers to permit their segregation at cell division. In Streptococcus agalactiae serotype Ia (strain ATCC 27591 / A909 / CDC SS700), this protein is Tyrosine recombinase XerS.